Consider the following 635-residue polypeptide: MSVGVSTSAPLSPTSGTSVGMSTFSIMDYVVFVLLLVLSLAIGLYHACRGWGRHTVGELLMADRKMGCLPVALSLLATFQSAVAILGVPSEIYRFGTQYWFLGCCYFLGLLIPAHIFIPVFYRLHLTSAYEYLELRFNKTVRVCGTVTFIFQMVIYMGVVLYAPSLALNAVTGFDLWLSVLALGIVCTVYTALGGLKAVIWTDVFQTLVMFLGQLAVIIVGSAKVGGLGRVWAVASQHGRISGFELDPDPFVRHTFWTLAFGGVFMMLSLYGVNQAQVQRYLSSRTEKAAVLSCYAVFPFQQVSLCVGCLIGLVMFAYYQEYPMSIQQAQAAPDQFVLYFVMDLLKGLPGLPGLFIACLFSGSLSTISSAFNSLATVTMEDLIRPWFPEFSEARAIMLSRGLAFGYGLLCLGMAYISSQMGPVLQAAISIFGMVGGPLLGLFCLGMFFPCANPPGAVVGLLAGLVMAFWIGIGSIVTSMGSSMPPSPSNGSSFSLPTNLTVATVTTLMPLTTFSKPTGLQRFYSLSYLWYSAHNSTTVIVVGLIVSLLTGRMRGRSLNPATIYPVLPKLLSLLPLSCQKRLHCRSYGQDHLDTGLFPEKPRNGVLGDSRDKEAMALDGTAYQGSSSTCILQETSL.

3 helical membrane-spanning segments follow: residues 24–44 (FSIM…AIGL), 68–88 (CLPV…ILGV), and 101–121 (FLGC…IPVF). Asparagine 138 is a glycosylation site (N-linked (GlcNAc...) asparagine). A run of 9 helical transmembrane segments spans residues 143–163 (VCGT…VLYA), 176–196 (LWLS…LGGL), 199–219 (VIWT…AVII), 256–276 (FWTL…VNQA), 297–317 (VFPF…VMFA), 336–356 (FVLY…GLFI), 396–416 (IMLS…MAYI), 428–448 (ISIF…GMFF), and 456–476 (AVVG…GSIV). Residues asparagine 489 and asparagine 498 are each glycosylated (N-linked (GlcNAc...) asparagine). Residues 528 to 548 (LWYSAHNSTTVIVVGLIVSLL) traverse the membrane as a helical segment.

The protein belongs to the sodium:solute symporter (SSF) (TC 2.A.21) family. As to quaternary structure, interacts with PDZD11. May be glycosylated. Expressed in microvessels of the brain (at protein level). Expressed in heart, brain, placenta, lung, liver, skeletal muscle, kidney, and pancreas.

It is found in the cell membrane. Its subcellular location is the apical cell membrane. The enzyme catalyses biotin(out) + 2 Na(+)(out) = biotin(in) + 2 Na(+)(in). It catalyses the reaction (R)-pantothenate(out) + 2 Na(+)(out) = (R)-pantothenate(in) + 2 Na(+)(in). The catalysed reaction is (R)-lipoate(out) + 2 Na(+)(out) = (R)-lipoate(in) + 2 Na(+)(in). It carries out the reaction iodide(out) + 2 Na(+)(out) = iodide(in) + 2 Na(+)(in). Its function is as follows. Sodium-dependent multivitamin transporter that mediates the electrogenic transport of pantothenate, biotin, lipoate and iodide. Functions as a Na(+)-coupled substrate symporter where the stoichiometry of Na(+):substrate is 2:1, creating an electrochemical Na(+) gradient used as driving force for substrate uptake. Required for biotin and pantothenate uptake in the intestine across the brush border membrane. Plays a role in the maintenance of intestinal mucosa integrity, by providing the gut mucosa with biotin. Contributes to the luminal uptake of biotin and pantothenate into the brain across the blood-brain barrier. The protein is Sodium-dependent multivitamin transporter of Homo sapiens (Human).